Here is a 427-residue protein sequence, read N- to C-terminus: Glutamate-1-semialdehyde 2,1-aminomutase (427 aa).

Residue K265 is modified to N6-(pyridoxal phosphate)lysine.

The protein belongs to the class-III pyridoxal-phosphate-dependent aminotransferase family. HemL subfamily. As to quaternary structure, homodimer. The cofactor is pyridoxal 5'-phosphate.

Its subcellular location is the cytoplasm. The enzyme catalyses (S)-4-amino-5-oxopentanoate = 5-aminolevulinate. It participates in porphyrin-containing compound metabolism; protoporphyrin-IX biosynthesis; 5-aminolevulinate from L-glutamyl-tRNA(Glu): step 2/2. The sequence is that of Glutamate-1-semialdehyde 2,1-aminomutase from Paraburkholderia phytofirmans (strain DSM 17436 / LMG 22146 / PsJN) (Burkholderia phytofirmans).